We begin with the raw amino-acid sequence, 193 residues long: MTISIYSHTFQSVPQADYVSLLKLRYKVFSQRLQWELKTNRGMETDEYDVPEAHYLYAKEEQGHLVGCWRILPTTSRYMLKDTFSELLGVQQAPKAKEIYELSRFAVDKDHSAQLGGVSNVTLQMFQSLYHHAQQYHINAYVTVTSASVEKLIKRMGIPCERLGDKKVHLLGSTRSVALHIPMNEAYRASVNA.

The protein belongs to the autoinducer synthase family.

It catalyses the reaction a fatty acyl-[ACP] + S-adenosyl-L-methionine = an N-acyl-L-homoserine lactone + S-methyl-5'-thioadenosine + holo-[ACP] + H(+). Required for the synthesis of N-(3-oxodecanoyl)-L-homoserine lactone (ODHL), an autoinducer molecule which binds to VanR. The polypeptide is Acyl-homoserine-lactone synthase (vanI) (Vibrio anguillarum (Listonella anguillarum)).